A 158-amino-acid polypeptide reads, in one-letter code: MNQEKLAKLQAQVRIGGKGTARRKKKVVHRTATADDKKLQSSLKKLAVNNIAGIEEVNMIKDDGTVIHFNNPKVQASLSANTFAITGHAEAKPITEMLPGILSQLGADSLTSLRKLAEQFPRQVLDSKTPKPEDIDEEEDDVPDLVENFDEASKNEAN.

K5 carries the N6-methyllysine modification. The 66-residue stretch at 33 to 98 (TADDKKLQSS…AEAKPITEML (66 aa)) folds into the NAC-A/B domain. T111 is subject to Phosphothreonine. The segment at 123–158 (QVLDSKTPKPEDIDEEEDDVPDLVENFDEASKNEAN) is disordered. The span at 134–150 (DIDEEEDDVPDLVENFD) shows a compositional bias: acidic residues.

Belongs to the NAC-beta family.

This is Transcription factor BTF3 homolog 4 (BTF3L4) from Bos taurus (Bovine).